Reading from the N-terminus, the 288-residue chain is Putative alkaline ceramidase dcd3A (288 aa).

Residue Asn-23 is glycosylated (N-linked (GlcNAc...) asparagine). 7 helical membrane passes run 41–61, 78–98, 105–125, 146–166, 172–192, 206–226, and 240–260; these read IISLFGIYGIWIMMPNFGTGV, VILSYISLIVVGVGSAFYHAT, LFDELPMIYTALIMLYIMVTV, HLLPYLLIAYGLFVTITILVI, ILQVSFGALVFYVVFHSIYLI, SYLYKYAFVSMLVGFTCWVVE, and LHAFWHFFTGMSTYVWTQFLI.

This sequence belongs to the alkaline ceramidase family.

It is found in the membrane. This is Putative alkaline ceramidase dcd3A (dcd3A) from Dictyostelium discoideum (Social amoeba).